A 213-amino-acid chain; its full sequence is Glycerol-3-phosphate acyltransferase (213 aa).

The next 6 helical transmembrane spans lie at 3-23, 48-68, 71-91, 119-139, 144-164, and 165-185; these read IIIL…GLWI, ILGV…GTLA, LPLI…LAVI, PFFL…FSMI, VVAA…GFIL, and TSYD…IIFR.

It belongs to the PlsY family. Probably interacts with PlsX.

It localises to the cell membrane. The enzyme catalyses an acyl phosphate + sn-glycerol 3-phosphate = a 1-acyl-sn-glycero-3-phosphate + phosphate. It functions in the pathway lipid metabolism; phospholipid metabolism. Its function is as follows. Catalyzes the transfer of an acyl group from acyl-phosphate (acyl-PO(4)) to glycerol-3-phosphate (G3P) to form lysophosphatidic acid (LPA). This enzyme utilizes acyl-phosphate as fatty acyl donor, but not acyl-CoA or acyl-ACP. This Lactococcus lactis subsp. cremoris (strain MG1363) protein is Glycerol-3-phosphate acyltransferase.